We begin with the raw amino-acid sequence, 303 residues long: N-acetyl-D-glucosamine kinase (303 aa).

ATP contacts are provided by residues 4 to 11 (GFDIGGTK) and 133 to 140 (GVGGGLIF). Zn(2+)-binding residues include H157, C177, C179, and C184.

Belongs to the ROK (NagC/XylR) family. NagK subfamily.

It carries out the reaction N-acetyl-D-glucosamine + ATP = N-acetyl-D-glucosamine 6-phosphate + ADP + H(+). The protein operates within cell wall biogenesis; peptidoglycan recycling. Functionally, catalyzes the phosphorylation of N-acetyl-D-glucosamine (GlcNAc) derived from cell-wall degradation, yielding GlcNAc-6-P. The chain is N-acetyl-D-glucosamine kinase from Shigella boydii serotype 4 (strain Sb227).